The sequence spans 432 residues: Asparagine--tRNA ligase (432 aa).

Belongs to the class-II aminoacyl-tRNA synthetase family. Homodimer.

It localises to the cytoplasm. It carries out the reaction tRNA(Asn) + L-asparagine + ATP = L-asparaginyl-tRNA(Asn) + AMP + diphosphate + H(+). In Lactobacillus helveticus (strain DPC 4571), this protein is Asparagine--tRNA ligase.